The chain runs to 271 residues: Shikimate kinase (271 aa).

Residue 83–93 (PIAMGLKSSSA) participates in ATP binding.

This sequence belongs to the GHMP kinase family. Archaeal shikimate kinase subfamily.

The protein resides in the cytoplasm. The enzyme catalyses shikimate + ATP = 3-phosphoshikimate + ADP + H(+). The protein operates within metabolic intermediate biosynthesis; chorismate biosynthesis; chorismate from D-erythrose 4-phosphate and phosphoenolpyruvate: step 5/7. The protein is Shikimate kinase of Thermococcus kodakarensis (strain ATCC BAA-918 / JCM 12380 / KOD1) (Pyrococcus kodakaraensis (strain KOD1)).